Reading from the N-terminus, the 395-residue chain is Glutamate N-acetyltransferase (395 aa).

The substrate site is built by Thr-146, Lys-169, Thr-180, Glu-263, Asn-390, and Thr-395. Residue Thr-180 is the Nucleophile of the active site.

It belongs to the ArgJ family. In terms of assembly, heterotetramer of two alpha and two beta chains.

It is found in the cytoplasm. The enzyme catalyses N(2)-acetyl-L-ornithine + L-glutamate = N-acetyl-L-glutamate + L-ornithine. It functions in the pathway amino-acid biosynthesis; L-arginine biosynthesis; L-ornithine and N-acetyl-L-glutamate from L-glutamate and N(2)-acetyl-L-ornithine (cyclic): step 1/1. Catalyzes the transfer of the acetyl group from N(2)-acetylornithine to glutamate, forming N-acetylglutamate and L-ornithine. This chain is Glutamate N-acetyltransferase, found in Methanosarcina mazei (strain ATCC BAA-159 / DSM 3647 / Goe1 / Go1 / JCM 11833 / OCM 88) (Methanosarcina frisia).